A 590-amino-acid chain; its full sequence is Arginine--tRNA ligase (590 aa).

The 'HIGH' region motif lies at 130-140 (ANPTGPMHVGH).

This sequence belongs to the class-I aminoacyl-tRNA synthetase family. Monomer.

The protein resides in the cytoplasm. It catalyses the reaction tRNA(Arg) + L-arginine + ATP = L-arginyl-tRNA(Arg) + AMP + diphosphate. This chain is Arginine--tRNA ligase, found in Methylobacterium nodulans (strain LMG 21967 / CNCM I-2342 / ORS 2060).